Reading from the N-terminus, the 309-residue chain is Short chain dehydrogenase MYCFIDRAFT_6125 (309 aa).

Residues Ile-43, Arg-67, Asp-88, and Arg-150 each contribute to the NADP(+) site. Ser-168 (proton donor) is an active-site residue. Positions 182, 186, 215, and 217 each coordinate NADP(+). The Proton acceptor role is filled by Tyr-182. Catalysis depends on Lys-186, which acts as the Lowers pKa of active site Tyr.

This sequence belongs to the short-chain dehydrogenases/reductases (SDR) family.

It participates in secondary metabolite biosynthesis. Functionally, short chain dehydrogenase; part of the gene cluster that mediates the biosynthesis of an emodin derivative that may be involved in black Sigatoka disease of banana. The pathway begins with the synthesis of atrochrysone thioester by the polyketide synthase PKS8-1. The atrochrysone carboxyl ACP thioesterase MYCFIDRAFT_190111 then breaks the thioester bond and releases the atrochrysone carboxylic acid from PKS8-1. The decarboxylase MYCFIDRAFT_34057 then catalyzes the concerted decarboxylation-elimination required to convert atochrysone carboxylic acid into emodin anthrone, which is further oxidized to emodin by the anthrone oxygenase MYCFIDRAFT_34418. The functions of the other tailoring enzymes as well as the final product of the cluster have still to be identified. This chain is Short chain dehydrogenase MYCFIDRAFT_6125, found in Pseudocercospora fijiensis (strain CIRAD86) (Black leaf streak disease fungus).